A 528-amino-acid chain; its full sequence is Importin subunit alpha-7 (528 aa).

The IBB domain occupies 1–56; the sequence is MKGGETMSVRRSGYKAVVDGVGGRRRREDDMVEIRKAKREESLLKKRREALPHSPS. ARM repeat units follow at residues 93 to 133, 136 to 175, 178 to 218, 220 to 259, 262 to 301, 304 to 344, 347 to 386, and 390 to 429; these read NVRV…NIAS, SENTEVVIDHGAVAILVRLLNSPYDVVREQVVWALGNISG, PRCR…NLCR, KPQPPFDQVSAALPALAQLIRLDDKELLAYTCWALVYLSD, NEKIQAVIEANVCARLIGLSIHRSPSVITPALRTIGNIVT, DSQT…NITA, QSQIQAVFDADICPALVNLLQNSEGDVKKEAAWAICNAIA, and YKQIMFLVKQECIKPLCDLLTCSDTQLVMVCLEALKKILK.

The protein belongs to the importin alpha family. In terms of assembly, forms a complex with importin subunit beta-1.

It is found in the nucleus envelope. Its function is as follows. Binds to conventional NLS motifs and mediates nuclear protein import across the nuclear envelope. Acts as a cellular receptor for the nuclear import of the virD2 protein of Agrobacterium, but is not essential for Agrobacterium-mediated root transformation. This Arabidopsis thaliana (Mouse-ear cress) protein is Importin subunit alpha-7.